The following is a 434-amino-acid chain: Chaperone SurA (434 aa).

A signal peptide spans methionine 1 to alanine 22. PpiC domains are found at residues glutamate 173–aspartate 274 and valine 283–aspartate 383.

It localises to the periplasm. It carries out the reaction [protein]-peptidylproline (omega=180) = [protein]-peptidylproline (omega=0). Chaperone involved in the correct folding and assembly of outer membrane proteins. Recognizes specific patterns of aromatic residues and the orientation of their side chains, which are found more frequently in integral outer membrane proteins. May act in both early periplasmic and late outer membrane-associated steps of protein maturation. The chain is Chaperone SurA from Shewanella denitrificans (strain OS217 / ATCC BAA-1090 / DSM 15013).